The primary structure comprises 236 residues: Protein YIPF6 (236 aa).

At A2 the chain carries N-acetylalanine. Residues 2–84 are Cytoplasmic-facing; sequence AEAEDSPGEQ…HVLYPRKSNT (83 aa). Position 7 is a phosphoserine (S7). The helical transmembrane segment at 85 to 105 threads the bilayer; the sequence is LLRDWDLWGPLILCVSLALML. Residues 106–116 are Lumenal-facing; it reads QKSSVEGKRDG. Residues 117–137 form a helical membrane-spanning segment; the sequence is GSPEFAEVFVIIWFGAVTITL. Residues 138 to 147 lie on the Cytoplasmic side of the membrane; sequence NSKLLGGNIS. Residues 148 to 168 form a helical membrane-spanning segment; it reads FFQSLCVLGYCVLPLNIAMLI. The Lumenal segment spans residues 169–185; sequence CRLLLLAGQGPINFMIR. Residues 186–206 form a helical membrane-spanning segment; that stretch reads LFVVLVMFAWSVIASTAFLAD. Over 207–213 the chain is Cytoplasmic; the sequence is CQPPNRK. Residues 214 to 234 form a helical membrane-spanning segment; it reads ALAVYPVFLFYFVVSWMILTF. Residues 235–236 are Lumenal-facing; it reads TP.

This sequence belongs to the YIP1 family. Predominantly interacts with YIPF1 or YIPF2, but may also form a ternary complex with YIPF1 and YIPF2. This interaction may stabilize YIPF1 and YIPF2.

The protein localises to the golgi apparatus membrane. May be required for stable YIPF1 and YIPF2 protein expression. This Rattus norvegicus (Rat) protein is Protein YIPF6 (Yipf6).